Consider the following 287-residue polypeptide: MPDELKPHFANVQAHYDLSDDFFRLFLDPTQTYSCAYFERDDMTLQEAQIAKIDLALGKLGLQPGMTLLDVGCGWGATMMRAVEKYDVNVVGLTLSKNQANHVQQLVANSENLRSKRVLLAGWEQFDEPVDRIVSIGAFEHFGHERYDAFFSLAHRLLPADGVMLLHTITGLHPKEIHERGLPMSFTFARFLKFIVTEIFPGGRLPSIPMVQECASANGFTVTRVQSLQPHYAKTLDLWSAALQANKGQDIALQSEEVYERYMKYLTGCAEMFRIGYIDVNQFTCQK.

S-adenosyl-L-methionine contacts are provided by residues 33–34 (YS), 68–76 (LLDVGCGWG), 94–99 (TLSKNQ), and 123–124 (WE). Cys269 is a catalytic residue.

The protein belongs to the CFA/CMAS family. Homodimer.

It localises to the cytoplasm. The enzyme catalyses a 1-acyl-2-(9Z)-enoyl-sn-glycero-3-phospholipid + S-adenosyl-L-methionine = a 1-acyl-2-(9-cyclopronane)-acyl-sn-glycero-3-phospholipid + S-adenosyl-L-homocysteine + H(+). Its pathway is lipid metabolism; mycolic acid biosynthesis. In terms of biological role, catalyzes the conversion of a double bond to a cyclopropane ring at the distal position of an alpha mycolic acid via the transfer of a methylene group from S-adenosyl-L-methionine. Cyclopropanated mycolic acids are key factors participating in cell envelope permeability, host immunomodulation and persistence. The sequence is that of Cyclopropane mycolic acid synthase 1 (cmaA1) from Mycobacterium tuberculosis (strain CDC 1551 / Oshkosh).